We begin with the raw amino-acid sequence, 231 residues long: 2-C-methyl-D-erythritol 4-phosphate cytidylyltransferase (231 aa).

It belongs to the IspD/TarI cytidylyltransferase family. IspD subfamily.

It catalyses the reaction 2-C-methyl-D-erythritol 4-phosphate + CTP + H(+) = 4-CDP-2-C-methyl-D-erythritol + diphosphate. It functions in the pathway isoprenoid biosynthesis; isopentenyl diphosphate biosynthesis via DXP pathway; isopentenyl diphosphate from 1-deoxy-D-xylulose 5-phosphate: step 2/6. In terms of biological role, catalyzes the formation of 4-diphosphocytidyl-2-C-methyl-D-erythritol from CTP and 2-C-methyl-D-erythritol 4-phosphate (MEP). This Clostridium novyi (strain NT) protein is 2-C-methyl-D-erythritol 4-phosphate cytidylyltransferase.